Consider the following 652-residue polypeptide: RNA-binding KH domain-containing protein RCF3 (652 aa).

The span at Met-1 to Gln-14 shows a compositional bias: basic and acidic residues. A disordered region spans residues Met-1–Glu-63. Residues Phe-34–Gly-55 show a composition bias toward gly residues. 2 consecutive KH domains span residues Thr-67–Leu-139 and Arg-175–Val-245. Residues Gln-253–Tyr-307 are disordered. Positions Arg-292–Asn-306 are enriched in low complexity. KH domains follow at residues Glu-324–Leu-391, Leu-408–Leu-476, and Arg-576–Leu-640.

In terms of assembly, homodimer. Interacts with CPL1. Interacts with RS40 and RS41. Interacts with DRB1/HYL1 and SE. Interacts with CPL2. As to expression, expressed in roots, cotyledons, leaves, flowers and siliques.

It is found in the nucleus. It localises to the nucleus speckle. Its function is as follows. Acts as a negative regulator of osmotic stress-induced gene expression. Involved in the regulation of thermotolerance responses under heat stress. Functions as an upstream regulator of heat stress transcription factor (HSF) genes. Negatively regulates HSFA1A, HSFA1B and HSFA1D, but positively controls the expression of HSFA1E, HSFA3, HSFA9, HSFB3, and DREB2C. Forms a complex with CPL1 that modulates co-transcriptional processes such as mRNA capping and polyadenylation, and functions to repress stress-inducible gene expression. Regulates pre-mRNA processing under salt stress. Involved in primary miRNA processing and pri-miRNA biogenesis. Binds both intronless and intron-containing pri-miRNAs. Acts as a regulator of biotic stress response gene expression and basal JA-mediated responses involved in defense. Acts as a negative regulator of resistance to the fungal pathogen Fusarium oxysporum. The chain is RNA-binding KH domain-containing protein RCF3 from Arabidopsis thaliana (Mouse-ear cress).